The primary structure comprises 46 residues: Ligatoxin-B (46 aa).

Cystine bridges form between Cys-3/Cys-40, Cys-4/Cys-32, and Cys-16/Cys-26.

Belongs to the plant thionin (TC 1.C.44) family.

The protein resides in the secreted. In terms of biological role, thionins are small plant proteins which are toxic to animal cells. They seem to exert their toxic effect at the level of the cell membrane. Their precise function is not known. The polypeptide is Ligatoxin-B (Phoradendron liga (Argentine mistletoe)).